A 439-amino-acid polypeptide reads, in one-letter code: GTPase Der (439 aa).

EngA-type G domains lie at 4-168 (PIVA…KDDE) and 177-352 (INIA…DNYT). Residues 10–17 (GRPNVGKS), 57–61 (DTGGI), 120–123 (NKID), 183–190 (GKPNVGKS), 230–234 (DTAGL), and 295–298 (NKWD) each bind GTP. The KH-like domain maps to 353 to 437 (KRVKTGVLND…GIKLEFRERK (85 aa)).

This sequence belongs to the TRAFAC class TrmE-Era-EngA-EngB-Septin-like GTPase superfamily. EngA (Der) GTPase family. Associates with the 50S ribosomal subunit.

In terms of biological role, GTPase that plays an essential role in the late steps of ribosome biogenesis. This is GTPase Der from Clostridium botulinum (strain Kyoto / Type A2).